A 170-amino-acid polypeptide reads, in one-letter code: Type IV pilus assembly protein C (170 aa).

The N-terminal stretch at 1–23 (MKSKLPLILINLSLISSPLGANA) is a signal peptide. The tract at residues 87 to 107 (KTVSKPAKSNTPPQQAPVNNS) is disordered. Residues 93–107 (AKSNTPPQQAPVNNS) show a composition bias toward polar residues. Residues 109 to 166 (RSILEAELSNERKALTEAQKMLSQARLAKGGNINHQKINALQSNVLDRQQNIQALQRE) are a coiled coil.

It is found in the periplasm. In terms of biological role, required for stabilizing type IV pilus (T4p) in extended, nonretracted conformation on the bacterial cell surface. The chain is Type IV pilus assembly protein C from Neisseria gonorrhoeae (strain ATCC 700825 / FA 1090).